We begin with the raw amino-acid sequence, 525 residues long: Glutathione hydrolase-like YwrD proenzyme (525 aa).

The active-site Nucleophile is Thr-339.

Belongs to the gamma-glutamyltransferase family. As to quaternary structure, this enzyme consists of two polypeptide chains, which are synthesized from a single polypeptide. Post-translationally, cleaved by autocatalysis into a large and a small subunit.

The enzyme catalyses an N-terminal (5-L-glutamyl)-[peptide] + an alpha-amino acid = 5-L-glutamyl amino acid + an N-terminal L-alpha-aminoacyl-[peptide]. It carries out the reaction glutathione + H2O = L-cysteinylglycine + L-glutamate. The catalysed reaction is an S-substituted glutathione + H2O = an S-substituted L-cysteinylglycine + L-glutamate. Functionally, overexpressed protein with an N-terminal His tag has been reported not to hydrolyze glutathione; it is not clear if the construct is processed to 2 subunits. In Bacillus subtilis (strain 168), this protein is Glutathione hydrolase-like YwrD proenzyme (ywrD).